The following is an 830-amino-acid chain: Penicillin-binding protein 1A (830 aa).

Over 1-18 (MGKKKKKRKSSAFKIILN) the chain is Cytoplasmic. Residues 19-39 (VFLSIFLVAGVAFGGIVFAMI) form a helical; Signal-anchor for type II membrane protein membrane-spanning segment. Over 40 to 830 (KTAPPLNVQQ…QNHEDNKNKQ (791 aa)) the chain is Extracellular. The interval 57–229 (SILYDDKGQY…PSVYYPYSSA (173 aa)) is transglycosylase. The Proton donor; for transglycosylase activity role is filled by glutamate 96. Residues 357 to 641 (ASAVIMDYHN…AARLWGDIMK (285 aa)) form a transpeptidase region. The active-site Acyl-ester intermediate; for transpeptidase activity is the serine 398. A disordered region spans residues 754 to 830 (GGSLPPTEEK…QNHEDNKNKQ (77 aa)). Basic and acidic residues predominate over residues 760-786 (TEEKNNSNTRDKNKDKNKNKNKDKNPS). The segment covering 787–820 (QDKPNNNNNDNNSNNNNNNNDNNNNTKPPENDSN) has biased composition (low complexity). Over residues 821-830 (QNHEDNKNKQ) the composition is skewed to basic and acidic residues.

This sequence in the N-terminal section; belongs to the glycosyltransferase 51 family. It in the C-terminal section; belongs to the transpeptidase family.

Its subcellular location is the cell membrane. The enzyme catalyses [GlcNAc-(1-&gt;4)-Mur2Ac(oyl-L-Ala-gamma-D-Glu-L-Lys-D-Ala-D-Ala)](n)-di-trans,octa-cis-undecaprenyl diphosphate + beta-D-GlcNAc-(1-&gt;4)-Mur2Ac(oyl-L-Ala-gamma-D-Glu-L-Lys-D-Ala-D-Ala)-di-trans,octa-cis-undecaprenyl diphosphate = [GlcNAc-(1-&gt;4)-Mur2Ac(oyl-L-Ala-gamma-D-Glu-L-Lys-D-Ala-D-Ala)](n+1)-di-trans,octa-cis-undecaprenyl diphosphate + di-trans,octa-cis-undecaprenyl diphosphate + H(+). The catalysed reaction is Preferential cleavage: (Ac)2-L-Lys-D-Ala-|-D-Ala. Also transpeptidation of peptidyl-alanyl moieties that are N-acyl substituents of D-alanine.. The protein operates within cell wall biogenesis; peptidoglycan biosynthesis. Its function is as follows. Cell wall formation. Synthesis of cross-linked peptidoglycan from the lipid intermediates. The enzyme has a penicillin-insensitive transglycosylase N-terminal domain (formation of linear glycan strands) and a penicillin-sensitive transpeptidase C-terminal domain (cross-linking of the peptide subunits). The polypeptide is Penicillin-binding protein 1A (pbpA) (Clostridium botulinum (strain Hall / ATCC 3502 / NCTC 13319 / Type A)).